A 733-amino-acid polypeptide reads, in one-letter code: Catalase-peroxidase 2 (733 aa).

The disordered stretch occupies residues 1-35 (MAEAETHPPIGESQTEPAESGCPMRIKPPVEGGSN). Residues 106 to 234 (WHAAGTYRVE…PXXPHMGLIY (129 aa)) constitute a cross-link (tryptophyl-tyrosyl-methioninium (Trp-Tyr) (with M-260)). The active-site Proton acceptor is His107. The tryptophyl-tyrosyl-methioninium (Tyr-Met) (with W-106) cross-link spans 234 to 260 (YVNPEGPEGNPDYLAAAIDIRETFGRM). A heme-binding site is contributed by His275.

It belongs to the peroxidase family. Peroxidase/catalase subfamily. Homodimer or homotetramer. Heme b serves as cofactor. In terms of processing, formation of the three residue Trp-Tyr-Met cross-link is important for the catalase, but not the peroxidase activity of the enzyme.

The enzyme catalyses H2O2 + AH2 = A + 2 H2O. The catalysed reaction is 2 H2O2 = O2 + 2 H2O. In terms of biological role, bifunctional enzyme with both catalase and broad-spectrum peroxidase activity. May play a role in the intracellular survival of mycobacteria. The chain is Catalase-peroxidase 2 from Mycolicibacterium fortuitum (Mycobacterium fortuitum).